Consider the following 440-residue polypeptide: Tubulin beta-3 chain (440 aa).

Positions 2, 60, 129, 133, 134, 135, 195, and 217 each coordinate GTP. Residue Glu-60 participates in Mg(2+) binding. Residues 411–440 form a disordered region; sequence SEYQQYQDATADEEGEYEDEEEEEPEHGYE. A compositionally biased stretch (acidic residues) spans 420-440; it reads TADEEGEYEDEEEEEPEHGYE.

It belongs to the tubulin family. Dimer of alpha and beta chains. A typical microtubule is a hollow water-filled tube with an outer diameter of 25 nm and an inner diameter of 15 nM. Alpha-beta heterodimers associate head-to-tail to form protofilaments running lengthwise along the microtubule wall with the beta-tubulin subunit facing the microtubule plus end conferring a structural polarity. Microtubules usually have 13 protofilaments but different protofilament numbers can be found in some organisms and specialized cells. It depends on Mg(2+) as a cofactor.

It localises to the cytoplasm. It is found in the cytoskeleton. Its function is as follows. Tubulin is the major constituent of microtubules, a cylinder consisting of laterally associated linear protofilaments composed of alpha- and beta-tubulin heterodimers. Microtubules grow by the addition of GTP-tubulin dimers to the microtubule end, where a stabilizing cap forms. Below the cap, tubulin dimers are in GDP-bound state, owing to GTPase activity of alpha-tubulin. The protein is Tubulin beta-3 chain (TUBB3) of Pisum sativum (Garden pea).